Here is a 929-residue protein sequence, read N- to C-terminus: Collagen alpha-1(XII) chain (929 aa).

A VWFA 1 domain is found at 1–49 (DVEIFAVGVKDAVRSELEAIATPPTATHVYTVEDFDAFQRISFELTQSI). Fibronectin type-III domains lie at 67–156 (PPRD…LEVR), 158–250 (APRN…VGEP), 251–340 (KNLR…LQER), 342–432 (SPRD…ASPD), 434–521 (KIVK…LSPF), and 523–613 (APRS…TLRD). N-linked (GlcNAc...) asparagine glycosylation is present at N98. Residues S231, S324, and S415 are each glycosylated (O-linked (Xyl...) (chondroitin sulfate) serine). The VWFA 2 domain maps to 633–805 (DIVLLVDGSW…SLLTNIVNDL (173 aa)). One can recognise a Fibronectin type-III 7 domain in the interval 821-910 (PPSNLVTSEP…AGTETTLPIP (90 aa)).

The protein belongs to the fibril-associated collagens with interrupted helices (FACIT) family. Trimer of identical chains each containing 190 kDa of non-triple-helical sequences. In terms of processing, the triple-helical tail is stabilized by disulfide bonds at each end. Prolines at the third position of the tripeptide repeating unit (G-X-Y) are hydroxylated in some or all of the chains.

Its subcellular location is the secreted. The protein resides in the extracellular space. It localises to the extracellular matrix. Functionally, type XII collagen interacts with type I collagen-containing fibrils, the COL1 domain could be associated with the surface of the fibrils, and the COL2 and NC3 domains may be localized in the perifibrillar matrix. Could play a developmental role in regeneration. The chain is Collagen alpha-1(XII) chain from Notophthalmus viridescens (Eastern newt).